The chain runs to 653 residues: Rab proteins geranylgeranyltransferase component A 1 (653 aa).

Residues 606–653 (PPPPNPEDIILDGDSLQPEASESSAIPEANSETFKESTNLGNLEESSE) form a disordered region. The segment covering 623–646 (PEASESSAIPEANSETFKESTNLG) has biased composition (polar residues).

This sequence belongs to the Rab GDI family. In terms of assembly, monomer. Heterotrimer composed of RABGGTA, RABGGTB and CHM; within this trimer, RABGGTA and RABGGTB form the catalytic component B, while CHM (component A) mediates Rab protein binding. Can associate with the Rab GGTase dimer (RGGT or component B) prior to Rab protein binding; the association is stabilized by geranylgeranyl pyrophosphate (GGpp). The CHM:RGGT:Rab complex is destabilized by GGpp. Interacts with RAB1A, RAB1B, RAB5A, RAB7A and RAB27A and mediates their prenylation. Interacts with the non-phosphorylated forms of RAB3A, RAB3B, RAB3C, RAB3D, RAB5B, RAB5C, RAB8A, RAB8B, RAB10, RAB12, RAB35, and RAB43.

The protein localises to the cytoplasm. It localises to the cytosol. Functionally, substrate-binding subunit of the Rab geranylgeranyltransferase (GGTase) complex. Binds unprenylated Rab proteins and presents the substrate peptide to the catalytic component B composed of RABGGTA and RABGGTB, and remains bound to it after the geranylgeranyl transfer reaction. The component A is thought to be regenerated by transferring its prenylated Rab back to the donor membrane. Besides, a pre-formed complex consisting of CHM and the Rab GGTase dimer (RGGT or component B) can bind to and prenylate Rab proteins; this alternative pathway is proposed to be the predominant pathway for Rab protein geranylgeranylation. This is Rab proteins geranylgeranyltransferase component A 1 (CHM) from Homo sapiens (Human).